We begin with the raw amino-acid sequence, 189 residues long: Segregation and condensation protein B (189 aa).

It belongs to the ScpB family. As to quaternary structure, homodimer. Homodimerization may be required to stabilize the binding of ScpA to the Smc head domains. Component of a cohesin-like complex composed of ScpA, ScpB and the Smc homodimer, in which ScpA and ScpB bind to the head domain of Smc. The presence of the three proteins is required for the association of the complex with DNA.

Its subcellular location is the cytoplasm. Participates in chromosomal partition during cell division. May act via the formation of a condensin-like complex containing Smc and ScpA that pull DNA away from mid-cell into both cell halves. This Lachnoclostridium phytofermentans (strain ATCC 700394 / DSM 18823 / ISDg) (Clostridium phytofermentans) protein is Segregation and condensation protein B.